The primary structure comprises 117 residues: Pancreatic progenitor cell differentiation and proliferation factor A (117 aa).

The interval 22–46 (GSTSSNSSCSSSEYTGEVIPHPPGL) is disordered. Positions 23–33 (STSSNSSCSSS) are enriched in low complexity.

It belongs to the PPDPF family. In terms of tissue distribution, expressed exclusively in the exocrine cells during pancreas development.

Its function is as follows. Probable regulator of exocrine pancreas development. This is Pancreatic progenitor cell differentiation and proliferation factor A (ppdpfa) from Danio rerio (Zebrafish).